The chain runs to 114 residues: uncharacterized protein (114 aa).

In terms of biological role, may be associated with transposition functions of transposon Tn903. This is an uncharacterized protein from Escherichia coli.